Consider the following 442-residue polypeptide: NAD kinase 2, mitochondrial (442 aa).

The transit peptide at 1 to 62 (MTCYRGFLLG…RELAGCGSRA (62 aa)) directs the protein to the mitochondrion. A compositionally biased stretch (low complexity) spans 24 to 36 (RGPGAGGPAARPR). Residues 24–60 (RGPGAGGPAARPRLGGDGGGRRHLGQGQPRELAGCGS) form a disordered region. Lysine 76 is modified (N6-acetyllysine; alternate). The residue at position 76 (lysine 76) is an N6-succinyllysine; alternate. Serine 188 bears the Phosphoserine mark. Residue lysine 302 is modified to N6-succinyllysine. Lysine 317 carries the post-translational modification N6-acetyllysine; alternate. Lysine 317 is modified (N6-succinyllysine; alternate). Serine 367 bears the Phosphoserine mark. N6-acetyllysine is present on lysine 397.

It belongs to the NAD kinase family. In terms of assembly, homodimer. In terms of tissue distribution, widely expressed.

It localises to the mitochondrion. It carries out the reaction NAD(+) + ATP = ADP + NADP(+) + H(+). Its activity is regulated as follows. Inhibited by NADH, NADPH and NADP(+). Functionally, mitochondrial NAD(+) kinase that phosphorylates NAD(+) to yield NADP(+). Can use both ATP or inorganic polyphosphate as the phosphoryl donor. Also has weak NADH kinase activity in vitro; however NADH kinase activity is much weaker than the NAD(+) kinase activity and may not be relevant in vivo. In Homo sapiens (Human), this protein is NAD kinase 2, mitochondrial (NADK2).